A 447-amino-acid chain; its full sequence is Putative FBD-associated F-box protein At1g61330 (447 aa).

Residues Lys-10–Ile-57 form the F-box domain. The 33-residue stretch at Val-384–Met-416 folds into the FBD domain.

This chain is Putative FBD-associated F-box protein At1g61330, found in Arabidopsis thaliana (Mouse-ear cress).